The primary structure comprises 378 residues: Queuine tRNA-ribosyltransferase (378 aa).

Catalysis depends on Asp89, which acts as the Proton acceptor. Residues 89–93, Asp143, Gln187, and Gly214 contribute to the substrate site; that span reads DSGGF. The tract at residues 245 to 251 is RNA binding; sequence GVGKPED. Asp264 functions as the Nucleophile in the catalytic mechanism. The interval 269-273 is RNA binding; important for wobble base 34 recognition; it reads TRNAR. Zn(2+) is bound by residues Cys302, Cys304, Cys307, and His333.

Belongs to the queuine tRNA-ribosyltransferase family. In terms of assembly, homodimer. Within each dimer, one monomer is responsible for RNA recognition and catalysis, while the other monomer binds to the replacement base PreQ1. Requires Zn(2+) as cofactor.

The catalysed reaction is 7-aminomethyl-7-carbaguanine + guanosine(34) in tRNA = 7-aminomethyl-7-carbaguanosine(34) in tRNA + guanine. Its pathway is tRNA modification; tRNA-queuosine biosynthesis. Catalyzes the base-exchange of a guanine (G) residue with the queuine precursor 7-aminomethyl-7-deazaguanine (PreQ1) at position 34 (anticodon wobble position) in tRNAs with GU(N) anticodons (tRNA-Asp, -Asn, -His and -Tyr). Catalysis occurs through a double-displacement mechanism. The nucleophile active site attacks the C1' of nucleotide 34 to detach the guanine base from the RNA, forming a covalent enzyme-RNA intermediate. The proton acceptor active site deprotonates the incoming PreQ1, allowing a nucleophilic attack on the C1' of the ribose to form the product. After dissociation, two additional enzymatic reactions on the tRNA convert PreQ1 to queuine (Q), resulting in the hypermodified nucleoside queuosine (7-(((4,5-cis-dihydroxy-2-cyclopenten-1-yl)amino)methyl)-7-deazaguanosine). This is Queuine tRNA-ribosyltransferase from Aeromonas hydrophila subsp. hydrophila (strain ATCC 7966 / DSM 30187 / BCRC 13018 / CCUG 14551 / JCM 1027 / KCTC 2358 / NCIMB 9240 / NCTC 8049).